Here is a 968-residue protein sequence, read N- to C-terminus: Alanine--tRNA ligase, cytoplasmic (968 aa).

N-acetylmethionine is present on Met1. Residues Arg77, His95, Trp176, and 214-216 (IWN) contribute to the ATP site. Residues Asn216 and Asp239 each coordinate L-alanine. Gly243 is a binding site for ATP. 2 positions are modified to phosphoserine: Ser399 and Ser555. Zn(2+) contacts are provided by His605, His609, Cys723, and His727. The Nuclear localization signal signature appears at 750–763 (RRIVAVTGAEAQKA). Lys876 carries the post-translational modification N6-acetyllysine. N6,N6,N6-trimethyllysine; alternate is present on Lys943. Lys943 carries the post-translational modification N6,N6-dimethyllysine; alternate. Position 943 is an N6-methyllysine; alternate (Lys943).

This sequence belongs to the class-II aminoacyl-tRNA synthetase family. In terms of assembly, monomer. Interacts with ANKRD16; the interaction is direct. The cofactor is Zn(2+). ISGylated. Post-translationally, methylation at 'Lys-943' by METTL21C.

It localises to the cytoplasm. It is found in the nucleus. The catalysed reaction is tRNA(Ala) + L-alanine + ATP = L-alanyl-tRNA(Ala) + AMP + diphosphate. It carries out the reaction (S)-lactate + ATP + H(+) = (S)-lactoyl-AMP + diphosphate. It catalyses the reaction (S)-lactoyl-AMP + L-lysyl-[protein] = N(6)-[(S)-lactoyl]-L-lysyl-[protein] + AMP + 2 H(+). Its activity is regulated as follows. The protein lactyltransferase activity is inhibited by beta-alanine. Functionally, catalyzes the attachment of alanine to tRNA(Ala) in a two-step reaction: alanine is first activated by ATP to form Ala-AMP and then transferred to the acceptor end of tRNA(Ala). Also edits incorrectly charged tRNA(Ala) via its editing domain. In presence of high levels of lactate, also acts as a protein lactyltransferase that mediates lactylation of lysine residues in target proteins, such as TEAD1, TP53/p53 and YAP1. Protein lactylation takes place in a two-step reaction: lactate is first activated by ATP to form lactate-AMP and then transferred to lysine residues of target proteins. Acts as an inhibitor of TP53/p53 activity by catalyzing lactylation of TP53/p53. Acts as a positive regulator of the Hippo pathway by mediating lactylation of TEAD1 and YAP1. The protein is Alanine--tRNA ligase, cytoplasmic of Mus musculus (Mouse).